Consider the following 122-residue polypeptide: Large ribosomal subunit protein uL14 (122 aa).

It belongs to the universal ribosomal protein uL14 family. As to quaternary structure, part of the 50S ribosomal subunit. Forms a cluster with proteins L3 and L19. In the 70S ribosome, L14 and L19 interact and together make contacts with the 16S rRNA in bridges B5 and B8.

Binds to 23S rRNA. Forms part of two intersubunit bridges in the 70S ribosome. The sequence is that of Large ribosomal subunit protein uL14 from Mycoplasmopsis pulmonis (strain UAB CTIP) (Mycoplasma pulmonis).